We begin with the raw amino-acid sequence, 497 residues long: Cytochrome P450 71A12 (497 aa).

Residues 4-24 (ILMVSLCLTTLITLFLLKQFL) traverse the membrane as a helical segment. Cys-439 serves as a coordination point for heme.

This sequence belongs to the cytochrome P450 family. Heme is required as a cofactor.

It is found in the membrane. Its function is as follows. Converts indole-3-acetaldoxime to indole cyanohydrin. Involved in the biosynthetic pathway to 4-hydroxyindole-3-carbonyl nitrile (4-OH-ICN), a cyanogenic metabolite required for inducible pathogen defense. The chain is Cytochrome P450 71A12 (CYP71A12) from Arabidopsis thaliana (Mouse-ear cress).